We begin with the raw amino-acid sequence, 286 residues long: Elongation factor Ts (286 aa).

Positions 79-82 (TDFV) are involved in Mg(2+) ion dislocation from EF-Tu.

Belongs to the EF-Ts family.

Its subcellular location is the cytoplasm. In terms of biological role, associates with the EF-Tu.GDP complex and induces the exchange of GDP to GTP. It remains bound to the aminoacyl-tRNA.EF-Tu.GTP complex up to the GTP hydrolysis stage on the ribosome. This chain is Elongation factor Ts, found in Wolbachia sp. subsp. Drosophila simulans (strain wRi).